A 204-amino-acid polypeptide reads, in one-letter code: Peptidyl-tRNA hydrolase (204 aa).

Tyr19 is a binding site for tRNA. His24 (proton acceptor) is an active-site residue. TRNA-binding residues include Tyr70, Asn72, and Asn118.

This sequence belongs to the PTH family. As to quaternary structure, monomer.

The protein resides in the cytoplasm. The catalysed reaction is an N-acyl-L-alpha-aminoacyl-tRNA + H2O = an N-acyl-L-amino acid + a tRNA + H(+). Functionally, hydrolyzes ribosome-free peptidyl-tRNAs (with 1 or more amino acids incorporated), which drop off the ribosome during protein synthesis, or as a result of ribosome stalling. Catalyzes the release of premature peptidyl moieties from peptidyl-tRNA molecules trapped in stalled 50S ribosomal subunits, and thus maintains levels of free tRNAs and 50S ribosomes. The polypeptide is Peptidyl-tRNA hydrolase (Prochlorococcus marinus (strain SARG / CCMP1375 / SS120)).